We begin with the raw amino-acid sequence, 522 residues long: Neutral amino acid uniporter 4 (522 aa).

The next 10 helical transmembrane spans lie at 115 to 135 (AGVLLGPISLLFFGIISIHCM), 181 to 201 (LVDWFLVVTQLGFCSVYFVFL), 226 to 246 (SLDLRIYMFSFLPLIIPLVFI), 255 to 275 (LSFFANVSMAISLLIVYQYVI), 293 to 313 (YPLFFGTAIFAFEGIGVVLPL), 329 to 349 (IGMAIVTTLYISLATLGYFCF), 377 to 397 (FGIYVTYAIQYYVPAEIILPA), 409 to 429 (LCEFTMRFFLVCLTCAVAVLI), 435 to 455 (VISFVGAVSSSTLALILPPLV), and 467 to 487 (PWVIMKDVGIAVIGFVGFIAG). Asn-515 is a glycosylation site (N-linked (GlcNAc...) asparagine).

Belongs to the amino acid/polyamine transporter 2 family.

It localises to the lysosome membrane. The catalysed reaction is L-tryptophan(in) = L-tryptophan(out). The enzyme catalyses L-alanine(in) = L-alanine(out). It carries out the reaction L-proline(in) = L-proline(out). Functionally, uniporter that mediates the transport of neutral amino acids like L-tryptophan, proline and alanine. The transport activity is sodium ions-independent, electroneutral and therefore functions via facilitated diffusion. In Xenopus laevis (African clawed frog), this protein is Neutral amino acid uniporter 4.